A 727-amino-acid polypeptide reads, in one-letter code: Platelet endothelial cell adhesion molecule (727 aa).

A signal peptide spans 1–17; sequence MLLALGLTLVLYASLQA. Residues 18 to 590 are Extracellular-facing; sequence EENSFTINSI…VRVFLAPWKK (573 aa). 6 Ig-like C2-type domains span residues 40–126, 135–213, 225–309, 315–391, 413–472, and 488–578; these read GQQL…PKVT, GGVV…PIRS, PKFE…IMVN, PKPK…LVPI, GHAI…NCHS, and PVDE…RSST. An intrachain disulfide couples Cys-47 to Cys-99. 2 N-linked (GlcNAc...) asparagine glycosylation sites follow: Asn-74 and Asn-141. Cystine bridges form between Cys-142–Cys-195 and Cys-245–Cys-293. Asn-309, Asn-345, Asn-360, Asn-424, and Asn-540 each carry an N-linked (GlcNAc...) asparagine glycan. Disulfide bonds link Cys-336/Cys-375, Cys-420/Cys-465, and Cys-512/Cys-561. A helical membrane pass occupies residues 591 to 609; that stretch reads GLIAVVVIGVVIATLIVAA. The Cytoplasmic segment spans residues 610 to 727; that stretch reads KCYFLRKAKA…SRTEGSLNGT (118 aa). The S-palmitoyl cysteine moiety is linked to residue Cys-611. Positions 642–672 are disordered; the sequence is SEPSVEANSHYGYDDVSGNDAVKPINQNKDP. Short sequence motifs (ITIM motif) lie at residues 677 to 682 and 700 to 705; these read VEYTEV and TVYSEI. Residues Tyr-679 and Tyr-702 each carry the phosphotyrosine; by FER modification. The segment at 698-718 is membrane-bound segment which detaches upon phosphorylation; that stretch reads TETVYSEIRKVDPNLMENRYS. The segment at 710–727 is may play a role in cytoprotective signaling; that stretch reads PNLMENRYSRTEGSLNGT. 2 positions are modified to phosphoserine: Ser-718 and Ser-723.

As to quaternary structure, trans-homodimer (via Ig-like C2-type 1 and Ig-like C2-type 2 domains); trans-homodimerization is required for cell-cell interaction. Forms a complex with BDKRB2 and GNAQ. Interacts with BDKRB2 and GNAQ. Interacts with PTPN11; Tyr-702 is critical for PTPN11 recruitment. Interacts with FER. Interacts with CD177; the interaction is Ca(2+)-dependent; the interaction is direct. Phosphorylated on Ser and Tyr residues by src kinases after cellular activation. Upon activation, phosphorylated on Ser-718 which probably initiates the dissociation of the membrane-interaction segment (residues 698-718) from the cell membrane allowing the sequential phosphorylation of Tyr-702 and Tyr-679. Constitutively phosphorylated on Ser-723 in resting platelets. Phosphorylated on tyrosine residues by FER and FES in response to FCER1 activation. In endothelial cells Fyn mediates mechanical-force (stretch or pull) induced tyrosine phosphorylation. Post-translationally, palmitoylation by ZDHHC21 is necessary for cell surface expression in endothelial cells and enrichment in membrane rafts. In terms of tissue distribution, expressed in lung and platelets (at protein level).

Its subcellular location is the cell membrane. It is found in the membrane raft. The protein resides in the cell junction. Its function is as follows. Cell adhesion molecule which is required for leukocyte transendothelial migration (TEM) under most inflammatory conditions. Tyr-679 plays a critical role in TEM and is required for efficient trafficking of PECAM1 to and from the lateral border recycling compartment (LBRC) and is also essential for the LBRC membrane to be targeted around migrating leukocytes. Trans-homophilic interaction may play a role in endothelial cell-cell adhesion via cell junctions. Heterophilic interaction with CD177 plays a role in transendothelial migration of neutrophils. Homophilic ligation of PECAM1 prevents macrophage-mediated phagocytosis of neighboring viable leukocytes by transmitting a detachment signal. Promotes macrophage-mediated phagocytosis of apoptotic leukocytes by tethering them to the phagocytic cells; PECAM1-mediated detachment signal appears to be disabled in apoptotic leukocytes. Modulates bradykinin receptor BDKRB2 activation. Regulates bradykinin- and hyperosmotic shock-induced ERK1/2 activation in endothelial cells. Induces susceptibility to atherosclerosis. This is Platelet endothelial cell adhesion molecule (Pecam1) from Mus musculus (Mouse).